The chain runs to 906 residues: Cadherin-2 (906 aa).

The signal sequence occupies residues 1-25; that stretch reads MCRIVGAPRTLLPLLAALLQASVEA. A propeptide spanning residues 26–159 is cleaved from the precursor; the sequence is SGGIALCKTG…HNGHLQRQKR (134 aa). Ser-96 and Ser-135 each carry phosphoserine. Cadherin domains are found at residues 160–267, 268–382, 383–497, 498–603, and 604–714; these read DWVI…RPEF, LHQV…PPEF, TAMS…NPYF, APNP…DNAP, and QVVP…DVDR. The Extracellular segment spans residues 160-724; sequence DWVIPPINLP…IVGAGLGTGA (565 aa). Glu-170 lines the Ca(2+) pocket. N-linked (GlcNAc...) asparagine glycosylation occurs at Asn-190. Ca(2+) is bound by residues Asp-226, Glu-228, Asp-259, Met-260, Asn-261, Asp-262, and Asn-263. Asn-273 carries N-linked (GlcNAc...) asparagine glycosylation. Ca(2+)-binding residues include Asp-293, Asp-295, and Asn-301. Asn-325 is a glycosylation site (N-linked (GlcNAc...) asparagine). Asp-353 contacts Ca(2+). Asn-402, Asn-572, Asn-622, Asn-651, and Asn-692 each carry an N-linked (GlcNAc...) asparagine glycan. The chain crosses the membrane as a helical span at residues 725-745; sequence IIAILLCIIILLILVLMFVVW. Over 746-906 the chain is Cytoplasmic; the sequence is MKRRDKERQA…LADMYGGGDD (161 aa). Over residues 863 to 880 the composition is skewed to low complexity; that stretch reads SGSTAGSLSSLNSSSSGG. The interval 863-884 is disordered; it reads SGSTAGSLSSLNSSSSGGEQDY.

In terms of assembly, homodimer (via extracellular region). Can also form heterodimers with other cadherins (via extracellular region). Dimerization occurs in trans, i.e. with a cadherin chain from another cell. Interacts with CDCP1. Interacts with PCDH8; this complex may also include TAOK2. The interaction with PCDH8 may lead to internalization through TAOK2/p38 MAPK pathway. Identified in a complex containing FGFR4, NCAM1, CDH2, PLCG1, FRS2, SRC, SHC1, GAP43 and CTTN. May interact with OBSCN (via protein kinase domain 2). Interacts with FBXO45. Post-translationally, cleaved by MMP24. Ectodomain cleavage leads to the generation of a soluble 90 kDa N-terminal soluble fragment and a 45 kDa membrane-bound C-terminal fragment 1 (CTF1), which is further cleaved by gamma-secretase into a 35 kDa. Cleavage in neural stem cells by MMP24 affects CDH2-mediated anchorage of neural stem cells to ependymocytes in the adult subependymal zone, leading to modulate neural stem cell quiescence. In terms of processing, may be phosphorylated by OBSCN.

The protein resides in the cell membrane. It localises to the sarcolemma. Its subcellular location is the cell junction. It is found in the cell surface. The protein localises to the desmosome. The protein resides in the adherens junction. In terms of biological role, calcium-dependent cell adhesion protein; preferentially mediates homotypic cell-cell adhesion by dimerization with a CDH2 chain from another cell. Cadherins may thus contribute to the sorting of heterogeneous cell types. Acts as a regulator of neural stem cells quiescence by mediating anchorage of neural stem cells to ependymocytes in the adult subependymal zone: upon cleavage by MMP24, CDH2-mediated anchorage is affected, leading to modulate neural stem cell quiescence. Plays a role in cell-to-cell junction formation between pancreatic beta cells and neural crest stem (NCS) cells, promoting the formation of processes by NCS cells. CDH2 may be involved in neuronal recognition mechanism. In hippocampal neurons, may regulate dendritic spine density. This Rhinolophus ferrumequinum (Greater horseshoe bat) protein is Cadherin-2 (CDH2).